The chain runs to 247 residues: Ribosomal RNA small subunit methyltransferase J (247 aa).

Residues 106–107 (RD), 122–123 (ER), and aspartate 168 each bind S-adenosyl-L-methionine.

The protein belongs to the methyltransferase superfamily. RsmJ family.

Its subcellular location is the cytoplasm. The catalysed reaction is guanosine(1516) in 16S rRNA + S-adenosyl-L-methionine = N(2)-methylguanosine(1516) in 16S rRNA + S-adenosyl-L-homocysteine + H(+). Its function is as follows. Specifically methylates the guanosine in position 1516 of 16S rRNA. The chain is Ribosomal RNA small subunit methyltransferase J from Alcanivorax borkumensis (strain ATCC 700651 / DSM 11573 / NCIMB 13689 / SK2).